The sequence spans 584 residues: uncharacterized protein (584 aa).

3 disordered regions span residues 123–156, 209–264, and 355–479; these read LSCS…PSSP, KIVT…INGG, and STQL…ITPT. Low complexity-rich tracts occupy residues 237-260 and 366-376; these read SLSF…PKSS and SISAATTTTIT. Polar residues-rich tracts occupy residues 377 to 388 and 395 to 419; these read PHNNNSTMTTKT and DTSN…STTP. The segment covering 425-479 has biased composition (low complexity); that stretch reads MSMTPLSSSSSSSTTPSKFINPLPSSSSKTTTTITNSKRLSTLSKPSPITPITPT.

This is an uncharacterized protein from Dictyostelium discoideum (Social amoeba).